Consider the following 433-residue polypeptide: Trigger factor (433 aa).

A PPIase FKBP-type domain is found at 163-248 (GDTVNIDFSG…VNEIKFKEVP (86 aa)).

Belongs to the FKBP-type PPIase family. Tig subfamily.

The protein resides in the cytoplasm. The catalysed reaction is [protein]-peptidylproline (omega=180) = [protein]-peptidylproline (omega=0). Its function is as follows. Involved in protein export. Acts as a chaperone by maintaining the newly synthesized protein in an open conformation. Functions as a peptidyl-prolyl cis-trans isomerase. The polypeptide is Trigger factor (Staphylococcus aureus (strain COL)).